We begin with the raw amino-acid sequence, 553 residues long: MTADNDTRDWTEKYRPVSLADIVGNDAAVKALRQWAETFGTGKKAVILYGGPGVGKTSAALALAHDMGWDYIELNASDVRTKDAINRIAGPAAMAGTFEGTGGRRLVILDEADNLHGNYDRGGEAAIINVIRNASQPVILIANDMYAMSKPLRESALQIQFRAILSTSVAKVLRKVCANEGLKCDPEALMKIAERTNDLRSAINDLQAAAQGSGQVTVADVSTGDRDVPETIFKVMGMIFRGKNMREALNATYGLDENPEDLIGWVDENLPREYQDDDLERGFEALSRADVYLGRTRRRQDYGMWRYAGFMMVCGVNRARRRHYGGFSRYSPPTYWQKLGRAKSTRVTRDSIAAKVGKACHCSKAEARSTYLPLLRFLFDKDEYAIRLSAQLKLEEDEIAFLLDAKKASKKVGEIYKKSRALIEEEIEEEIDLFARFGKRPGKPEAGEPRESLFMAGEEEEKPSREKSAKLDAFGEIEKPKRKRRKAPDGGAPIEDGPEEPGEAPMAAAMPAATESFGPAGAPAPQESPLPEPEKPPAAEDKCSKKQRTLFDF.

50 to 57 (GGPGVGKT) serves as a coordination point for ATP. The segment at 438–553 (GKRPGKPEAG…SKKQRTLFDF (116 aa)) is disordered. The span at 442-451 (GKPEAGEPRE) shows a compositional bias: basic and acidic residues. Residues 503–513 (EAPMAAAMPAA) show a composition bias toward low complexity. Over residues 532-553 (EPEKPPAAEDKCSKKQRTLFDF) the composition is skewed to basic and acidic residues.

Belongs to the activator 1 small subunits family. RfcL subfamily. In terms of assembly, heteromultimer composed of small subunits (RfcS) and large subunits (RfcL).

Its function is as follows. Part of the RFC clamp loader complex which loads the PCNA sliding clamp onto DNA. This is Replication factor C large subunit from Methanocella arvoryzae (strain DSM 22066 / NBRC 105507 / MRE50).